The chain runs to 260 residues: Thiamine thiazole synthase (260 aa).

NAD(+)-binding positions include A36, 55–56, G63, and 154–156; these read EQ and HVD. 2 residues coordinate Fe cation: D156 and H171. Residue M224 participates in NAD(+) binding. R234 lines the glycine pocket.

This sequence belongs to the THI4 family. As to quaternary structure, homooctamer; tetramer of dimers. Fe(2+) serves as cofactor.

It carries out the reaction hydrogen sulfide + glycine + NAD(+) = ADP-5-ethyl-4-methylthiazole-2-carboxylate + nicotinamide + 3 H2O + H(+). Its pathway is cofactor biosynthesis; thiamine diphosphate biosynthesis. Functionally, involved in the biosynthesis of the thiazole moiety of thiamine. Catalyzes the conversion of NAD and glycine to adenosine diphosphate 5-(2-hydroxyethyl)-4-methylthiazole-2-carboxylate (ADT), an adenylated thiazole intermediate, using free sulfide as a source of sulfur. This Methanosarcina acetivorans (strain ATCC 35395 / DSM 2834 / JCM 12185 / C2A) protein is Thiamine thiazole synthase.